Consider the following 172-residue polypeptide: Lipopolysaccharide export system protein LptA (172 aa).

The N-terminal stretch at 1-23 (MKLVSNKILFLATMVLASSSAFA) is a signal peptide.

The protein belongs to the LptA family. As to quaternary structure, component of the lipopolysaccharide transport and assembly complex.

Its subcellular location is the periplasm. Its function is as follows. Involved in the assembly of lipopolysaccharide (LPS). Required for the translocation of LPS from the inner membrane to the outer membrane. May form a bridge between the inner membrane and the outer membrane, via interactions with LptC and LptD, thereby facilitating LPS transfer across the periplasm. The sequence is that of Lipopolysaccharide export system protein LptA from Haemophilus influenzae (strain ATCC 51907 / DSM 11121 / KW20 / Rd).